The chain runs to 548 residues: Beta-lactamase-like protein 2 (548 aa).

An N-terminal signal peptide occupies residues 1–24 (MKIMNKQSITIFLIICFLINLILS). N-linked (GlcNAc...) asparagine glycans are attached at residues N237, N258, N443, and N459.

It belongs to the beta-lactamase family.

The protein localises to the secreted. The chain is Beta-lactamase-like protein 2 from Dictyostelium discoideum (Social amoeba).